Here is a 293-residue protein sequence, read N- to C-terminus: Protein nud-2 (293 aa).

The stretch at 36–147 (EIEKMMDSEL…EKIAMLESEL (112 aa)) forms a coiled coil. The segment at 239-293 (KSQRVSTGTGAGACINRIVKDLMTKVERLDSILSTIRVSNNSSNNNSSHLTTTRA) is required for interaction with unc-83 isoform c.

Belongs to the nudE family. As to quaternary structure, component of a dynein-regulating complex composed of at least lis-1 and nud-2. Interacts with lis-1; the interaction is direct. Interacts (via C-terminus) with unc-83; the interaction is direct, and is required for recruitment of nud-2 to the nuclear envelope. Expressed in ventral cord neurons, the pharynx, seam cells of the hypodermis and in vulval muscle cells.

The protein resides in the nucleus envelope. Its function is as follows. Part of a complex with lis-1, which is recruited to the nuclear envelope by unc-83, where, in turn, it recruits dynein to the nuclear surface and regulates nuclear migration in hypodermal precursor cells. Plays a role in GABAergic synaptic vesicle localization in the ventral nerve cord. This Caenorhabditis elegans protein is Protein nud-2.